A 164-amino-acid polypeptide reads, in one-letter code: Coenzyme Q-binding protein coq10, mitochondrial (164 aa).

This sequence belongs to the COQ10 family. Interacts with coenzyme Q.

The protein resides in the mitochondrion inner membrane. Required for the function of coenzyme Q in the respiratory chain. May serve as a chaperone or may be involved in the transport of Q6 from its site of synthesis to the catalytic sites of the respiratory complexes. This chain is Coenzyme Q-binding protein coq10, mitochondrial, found in Schizosaccharomyces pombe (strain 972 / ATCC 24843) (Fission yeast).